The chain runs to 250 residues: Expansin-like B1 (250 aa).

A signal peptide spans 1–24 (MKHSHVLLLLFVQVIVLLPLLCLS). The Expansin-like EG45 domain maps to 45–149 (RGHCGYGEFG…QRIPCRYAGY (105 aa)). An N-linked (GlcNAc...) asparagine glycan is attached at Asn-72. Residues 163 to 245 (HYLAILVLYV…DWTAGATYDS (83 aa)) enclose the Expansin-like CBD domain.

Belongs to the expansin family. Expansin-like B subfamily.

The protein resides in the secreted. The chain is Expansin-like B1 (EXLB1) from Arabidopsis thaliana (Mouse-ear cress).